We begin with the raw amino-acid sequence, 407 residues long: Indoleamine 2,3-dioxygenase 1 (407 aa).

Histidine 350 lines the heme b pocket. The segment at serine 362–valine 388 is disordered.

This sequence belongs to the indoleamine 2,3-dioxygenase family. Monomer. Heme b serves as cofactor.

It localises to the cytoplasm. The protein resides in the cytosol. It catalyses the reaction D-tryptophan + O2 = N-formyl-D-kynurenine. The catalysed reaction is L-tryptophan + O2 = N-formyl-L-kynurenine. Activity is inhibited by and MTH-trp (methylthiohydantoin-DL-tryptophan), modestly inhibited by L-1MT (1-methyl-L-tryptophan) but not D-1MT (1-methyl-D-tryptophan). Catalyzes the first and rate limiting step of the catabolism of the essential amino acid tryptophan along the kynurenine pathway. Involved in the peripheral immune tolerance, contributing to maintain homeostasis by preventing autoimmunity or immunopathology that would result from uncontrolled and overreacting immune responses. Tryptophan shortage inhibits T lymphocytes division and accumulation of tryptophan catabolites induces T-cell apoptosis and differentiation of regulatory T-cells. Acts as a suppressor of anti-tumor immunity. Limits the growth of intracellular pathogens by depriving tryptophan. Protects the fetus from maternal immune rejection. The protein is Indoleamine 2,3-dioxygenase 1 of Rattus norvegicus (Rat).